The following is a 213-amino-acid chain: Proteasome subunit beta (213 aa).

The propeptide at methionine 1–glycine 11 is removed in mature form; by autocatalysis. Threonine 12 acts as the Nucleophile in catalysis.

This sequence belongs to the peptidase T1B family. The 20S proteasome core is composed of 14 alpha and 14 beta subunits that assemble into four stacked heptameric rings, resulting in a barrel-shaped structure. The two inner rings, each composed of seven catalytic beta subunits, are sandwiched by two outer rings, each composed of seven alpha subunits. The catalytic chamber with the active sites is on the inside of the barrel. Has a gated structure, the ends of the cylinder being occluded by the N-termini of the alpha-subunits. Is capped at one or both ends by the proteasome regulatory ATPase, PAN.

The protein resides in the cytoplasm. It carries out the reaction Cleavage of peptide bonds with very broad specificity.. Its activity is regulated as follows. The formation of the proteasomal ATPase PAN-20S proteasome complex, via the docking of the C-termini of PAN into the intersubunit pockets in the alpha-rings, triggers opening of the gate for substrate entry. Interconversion between the open-gate and close-gate conformations leads to a dynamic regulation of the 20S proteasome proteolysis activity. Component of the proteasome core, a large protease complex with broad specificity involved in protein degradation. In Methanoregula boonei (strain DSM 21154 / JCM 14090 / 6A8), this protein is Proteasome subunit beta.